The primary structure comprises 535 residues: Cytochrome c oxidase subunit 1 (535 aa).

The helical transmembrane segment at 17–37 threads the bilayer; sequence ILYFIFAIFSGVIGSTMSLII. Residues glutamate 40, alanine 43, and glycine 45 each coordinate Ca(2+). Transmembrane regions (helical) follow at residues 58 to 78, 104 to 124, 147 to 167, 184 to 204, 236 to 256, and 268 to 288; these read VLVVGHALLMIFFLVMPGLVG, FWLLPPALVCLVASTLIESWA, LGIFAIHLTSISSLLGAINFI, PLFVWAIIITAVMLLLSLPVL, LFWFFGHPEVYILIVPGFGII, and VFGEISMVYAMASIAFLGFLV. Histidine 63 contributes to the Fe(II)-heme a binding site. Histidine 242 contributes to the Cu cation binding site. The segment at residues 242-246 is a cross-link (1'-histidyl-3'-tyrosine (His-Tyr)); that stretch reads HPEVY. Tyrosine 246 is an O2 binding site. Residues histidine 291 and histidine 292 each coordinate Cu cation. Transmembrane regions (helical) follow at residues 311 to 331 and 339 to 359; these read MVIAVPTGIKIFSWLATLYGG and MLYAIAFLFLFTIGGLTGVAL. Residues histidine 369 and aspartate 370 each contribute to the Mg(2+) site. Transmembrane regions (helical) follow at residues 373 to 393 and 413 to 433; these read YVVGHFHYVLSMGAIFSLFAG and IQFWLIFVGANVIFMPMHFLG. Position 377 (histidine 377) interacts with heme a3. Position 379 (histidine 379) interacts with Fe(II)-heme a. Proline 442 contacts Ca(2+). A helical transmembrane segment spans residues 453–473; the sequence is YVSSIGSVIAIISLALFIYII.

The protein belongs to the heme-copper respiratory oxidase family. In terms of assembly, component of the cytochrome c oxidase (complex IV, CIV), a multisubunit enzyme composed of a catalytic core of 3 subunits and several supernumerary subunits. The complex exists as a monomer or a dimer and forms supercomplexes (SCs) in the inner mitochondrial membrane with ubiquinol-cytochrome c oxidoreductase (cytochrome b-c1 complex, complex III, CIII). Heme serves as cofactor. Requires Cu cation as cofactor.

The protein resides in the mitochondrion inner membrane. It carries out the reaction 4 Fe(II)-[cytochrome c] + O2 + 8 H(+)(in) = 4 Fe(III)-[cytochrome c] + 2 H2O + 4 H(+)(out). The protein operates within energy metabolism; oxidative phosphorylation. Functionally, component of the cytochrome c oxidase, the last enzyme in the mitochondrial electron transport chain which drives oxidative phosphorylation. The respiratory chain contains 3 multisubunit complexes succinate dehydrogenase (complex II, CII), ubiquinol-cytochrome c oxidoreductase (cytochrome b-c1 complex, complex III, CIII) and cytochrome c oxidase (complex IV, CIV), that cooperate to transfer electrons derived from NADH and succinate to molecular oxygen, creating an electrochemical gradient over the inner membrane that drives transmembrane transport and the ATP synthase. Cytochrome c oxidase is the component of the respiratory chain that catalyzes the reduction of oxygen to water. Electrons originating from reduced cytochrome c in the intermembrane space (IMS) are transferred via the dinuclear copper A center (CU(A)) of subunit 2 and heme A of subunit 1 to the active site in subunit 1, a binuclear center (BNC) formed by heme A3 and copper B (CU(B)). The BNC reduces molecular oxygen to 2 water molecules using 4 electrons from cytochrome c in the IMS and 4 protons from the mitochondrial matrix. The sequence is that of Cytochrome c oxidase subunit 1 (COX1) from Wickerhamomyces canadensis (Yeast).